The sequence spans 472 residues: Glycerol-3-phosphate acyltransferase, chloroplastic (472 aa).

A chloroplast-targeting transit peptide spans 1–102 (MLVLSSSAPP…EIPVKKEDDN (102 aa)). The short motif at 241 to 246 (HQSEAD) is the HXXXXD motif element.

The protein belongs to the GPAT/DAPAT family.

The protein localises to the plastid. Its subcellular location is the chloroplast stroma. It carries out the reaction sn-glycerol 3-phosphate + an acyl-CoA = a 1-acyl-sn-glycero-3-phosphate + CoA. It participates in phospholipid metabolism; CDP-diacylglycerol biosynthesis; CDP-diacylglycerol from sn-glycerol 3-phosphate: step 1/3. Functionally, esterifies acyl-group from acyl-ACP to the sn-1 position of glycerol-3-phosphate. The enzyme from chilling-resistant plants discriminates against non-fluid palmitic acid and selects oleic acid whereas the enzyme from sensitive plants accepts both fatty acids. This is an oleate-selective acyltransferase. The protein is Glycerol-3-phosphate acyltransferase, chloroplastic (GAT) of Spinacia oleracea (Spinach).